A 292-amino-acid chain; its full sequence is UDP-N-acetylenolpyruvoylglucosamine reductase (292 aa).

The 162-residue stretch at 27–188 (KIGGPVRLFI…LRVGFRIIKG (162 aa)) folds into the FAD-binding PCMH-type domain. Arg-166 is a catalytic residue. The active-site Proton donor is the Ser-217. The active site involves Glu-288.

This sequence belongs to the MurB family. FAD serves as cofactor.

Its subcellular location is the cytoplasm. It carries out the reaction UDP-N-acetyl-alpha-D-muramate + NADP(+) = UDP-N-acetyl-3-O-(1-carboxyvinyl)-alpha-D-glucosamine + NADPH + H(+). It participates in cell wall biogenesis; peptidoglycan biosynthesis. Its function is as follows. Cell wall formation. The polypeptide is UDP-N-acetylenolpyruvoylglucosamine reductase (Thermosipho melanesiensis (strain DSM 12029 / CIP 104789 / BI429)).